Reading from the N-terminus, the 211-residue chain is Protein-L-isoaspartate O-methyltransferase (211 aa).

The active site involves Ser62.

The protein belongs to the methyltransferase superfamily. L-isoaspartyl/D-aspartyl protein methyltransferase family.

The protein resides in the cytoplasm. The catalysed reaction is [protein]-L-isoaspartate + S-adenosyl-L-methionine = [protein]-L-isoaspartate alpha-methyl ester + S-adenosyl-L-homocysteine. Its function is as follows. Catalyzes the methyl esterification of L-isoaspartyl residues in peptides and proteins that result from spontaneous decomposition of normal L-aspartyl and L-asparaginyl residues. It plays a role in the repair and/or degradation of damaged proteins. This is Protein-L-isoaspartate O-methyltransferase from Shewanella sp. (strain MR-4).